Reading from the N-terminus, the 297-residue chain is Virulence genes transcriptional activator (297 aa).

In terms of domain architecture, HTH lysR-type spans 1-61 (MDFLINKKLK…IRKNGTLIPT (61 aa)). Positions 21–40 (FSIATSVLYITRTPLSRVIS) form a DNA-binding region, H-T-H motif.

Belongs to the LysR transcriptional regulatory family.

It localises to the cytoplasm. In terms of biological role, positive regulator for the plasmid-encoded virulence factors SpvA, SpvB, and SpvC. This is Virulence genes transcriptional activator (mkaC) from Salmonella typhimurium (strain LT2 / SGSC1412 / ATCC 700720).